Here is a 334-residue protein sequence, read N- to C-terminus: Malate dehydrogenase, cytoplasmic (334 aa).

At S2 the chain carries N-acetylserine. Residues 11–17 (GAAGQIA) and D42 contribute to the NAD(+) site. 2 residues coordinate substrate: R92 and R98. N105 contributes to the NAD(+) binding site. K110 bears the N6-succinyllysine mark. An NAD(+)-binding site is contributed by Q112. N6-acetyllysine occurs at positions 118 and 121. Position 129–131 (129–131 (VGN)) interacts with NAD(+). Positions 131 and 162 each coordinate substrate. The active-site Proton acceptor is the H187. K214 bears the N6-succinyllysine mark. Phosphoserine is present on S217. Residue R230 is modified to Omega-N-methylarginine. At S241 the chain carries Phosphoserine. K298 bears the N6-acetyllysine; alternate mark. K298 carries the N6-succinyllysine; alternate modification. S309 carries the post-translational modification Phosphoserine. K318 carries the post-translational modification N6-succinyllysine. S333 bears the Phosphoserine mark.

This sequence belongs to the LDH/MDH superfamily. MDH type 2 family. Homodimer. Post-translationally, ISGylated. In terms of processing, acetylation at Lys-118 dramatically enhances enzymatic activity and promotes adipogenic differentiation.

The protein localises to the cytoplasm. Its subcellular location is the cytosol. It catalyses the reaction (S)-malate + NAD(+) = oxaloacetate + NADH + H(+). The catalysed reaction is (2R)-2-hydroxy-3-(4-hydroxyphenyl)propanoate + NAD(+) = 3-(4-hydroxyphenyl)pyruvate + NADH + H(+). The enzyme catalyses (S)-2-hydroxyglutarate + NAD(+) = 2-oxoglutarate + NADH + H(+). Its function is as follows. Catalyzes the reduction of aromatic alpha-keto acids in the presence of NADH. Plays essential roles in the malate-aspartate shuttle and the tricarboxylic acid cycle, important in mitochondrial NADH supply for oxidative phosphorylation. Catalyzes the reduction of 2-oxoglutarate to 2-hydroxyglutarate, leading to elevated reactive oxygen species (ROS). In Bos taurus (Bovine), this protein is Malate dehydrogenase, cytoplasmic (MDH1).